We begin with the raw amino-acid sequence, 224 residues long: MFPKINTIDPYISLRLFEVKPKYVGYSSVDARNQSFAIHDIKNYEKFSNAGLFYTSPTEITCYCCGMKFCNWLYEKHPLQVHAFWSRNCGFMRATLGIIGLKKMIDSYNDYYNNEVFVKHKNRVYTHKRLEDMGFSKPFMQFILANAFIPPYRKYIHKIILNDRYFTFKFAAHLLSFHKVNLDNQTTYCMTCGIEPIKKDENFCNACKTLNYKHYKTLNFSVKL.

One copy of the BIR repeat lies at 29–92 (VDARNQSFAI…AFWSRNCGFM (64 aa)). Residues cysteine 62, cysteine 65, histidine 82, and cysteine 89 each coordinate Zn(2+).

Belongs to the asfivirus IAP family. As to quaternary structure, interacts with subunit p17 of host CASP3.

Its subcellular location is the host cytoplasm. It localises to the virion. In terms of biological role, prevents apoptosis of host cell by inhibiting caspase-3/CASP3 activation to promote the viral replication. Also induces the activation of host NF-kappaB. This African swine fever virus (isolate Tick/South Africa/Wildebeeslaagte M1/1996) (ASFV) protein is Inhibitor of apoptosis protein (p27).